A 352-amino-acid chain; its full sequence is Biotin synthase (352 aa).

The Radical SAM core domain maps to 44-262; that stretch reads NRVQVSTLLS…LAVARILMPK (219 aa). The [4Fe-4S] cluster site is built by cysteine 59, cysteine 63, and cysteine 66. Residues cysteine 103, cysteine 134, cysteine 194, and arginine 266 each coordinate [2Fe-2S] cluster.

Belongs to the radical SAM superfamily. Biotin synthase family. Homodimer. The cofactor is [4Fe-4S] cluster. [2Fe-2S] cluster serves as cofactor.

The catalysed reaction is (4R,5S)-dethiobiotin + (sulfur carrier)-SH + 2 reduced [2Fe-2S]-[ferredoxin] + 2 S-adenosyl-L-methionine = (sulfur carrier)-H + biotin + 2 5'-deoxyadenosine + 2 L-methionine + 2 oxidized [2Fe-2S]-[ferredoxin]. Its pathway is cofactor biosynthesis; biotin biosynthesis; biotin from 7,8-diaminononanoate: step 2/2. Catalyzes the conversion of dethiobiotin (DTB) to biotin by the insertion of a sulfur atom into dethiobiotin via a radical-based mechanism. This chain is Biotin synthase, found in Pseudomonas putida (strain GB-1).